Consider the following 40-residue polypeptide: Chaperonin HSP60, mitochondrial (40 aa).

The protein belongs to the chaperonin (HSP60) family.

The protein resides in the mitochondrion. Its function is as follows. Implicated in mitochondrial protein import and macromolecular assembly. May facilitate the correct folding of imported proteins. May also prevent misfolding and promote the refolding and proper assembly of unfolded polypeptides generated under stress conditions in the mitochondrial matrix. This chain is Chaperonin HSP60, mitochondrial, found in Solanum tuberosum (Potato).